Reading from the N-terminus, the 472-residue chain is Uronate isomerase (472 aa).

Belongs to the metallo-dependent hydrolases superfamily. Uronate isomerase family.

It catalyses the reaction D-glucuronate = D-fructuronate. It carries out the reaction aldehydo-D-galacturonate = keto-D-tagaturonate. The protein operates within carbohydrate metabolism; pentose and glucuronate interconversion. This chain is Uronate isomerase, found in Xanthomonas euvesicatoria pv. vesicatoria (strain 85-10) (Xanthomonas campestris pv. vesicatoria).